The chain runs to 340 residues: Solute carrier family 35 member G3 (340 aa).

The interval 11 to 33 is disordered; the sequence is PDFTQPSPPSTPASLPSKHHHRC. Helical transmembrane passes span 39–59, 69–89, 107–127, 160–180, 189–209, 223–243, 257–277, 283–303, and 307–327; these read TKGL…VGPF, LPSL…ALLL, FLHA…VQVV, AWCG…PGLG, LYTA…SLGL, TVAF…LFVL, CVVA…YAVT, LVCA…YYVL, and VAPS…IITA. Residues 51–176 form the EamA 1 domain; that stretch reads LSAGFVGPFS…STLGLIIIVG (126 aa). The EamA 2 domain occupies 274-327; sequence YAVTKAHPALVCAVLHSEVVVALMLQYYVLYETVAPSDIMGAGVVLGSIAIITA.

It belongs to the SLC35G solute transporter family.

The protein resides in the membrane. The polypeptide is Solute carrier family 35 member G3 (Slc35g3) (Mus musculus (Mouse)).